We begin with the raw amino-acid sequence, 227 residues long: Abasic site processing protein YoaM (227 aa).

C2 serves as the catalytic Nucleophile. C2 carries the thiazolidine linkage to a ring-opened DNA abasic site modification. Residue E106 is part of the active site.

This sequence belongs to the SOS response-associated peptidase family.

Formation and reversal of DNA-protein cross-link depends on DNA context. Catalyzes formation of the thiazolidine linkage in presence of abasic sites in single-stranded DNA. Mediates the reversal of the thiazolidine cross-link in presence of double stranded DNA. Sensor of abasic sites in single-stranded DNA (ssDNA) required to preserve genome integrity by promoting error-free repair of abasic sites. Recognizes and binds abasic sites in ssDNA at replication forks and chemically modifies the lesion by forming a covalent cross-link with DNA: forms a stable thiazolidine linkage between a ring-opened abasic site and the alpha-amino and sulfhydryl substituents of its N-terminal catalytic cysteine residue. The DNA-protein cross-link is then reversed: able to catalyze the reversal of the thiazolidine cross-link and cycle between a cross-link and a non-cross-linked state depending on DNA context: mediates self-reversal of the thiazolidine cross-link in double stranded DNA. May act as a protease: mediates autocatalytic processing of its N-terminal methionine in order to expose the catalytic cysteine. The chain is Abasic site processing protein YoaM (yoaM) from Bacillus subtilis (strain 168).